Reading from the N-terminus, the 329-residue chain is Serine dehydratase-like (329 aa).

At Met-1 the chain carries N-acetylmethionine. Lys-48 bears the N6-(pyridoxal phosphate)lysine mark.

The protein belongs to the serine/threonine dehydratase family. As to quaternary structure, monomer. Homodimer. Pyridoxal 5'-phosphate is required as a cofactor. Expressed in lung cancer cell lines.

It carries out the reaction L-serine = pyruvate + NH4(+). The enzyme catalyses L-threonine = 2-oxobutanoate + NH4(+). The catalysed reaction is L-glutamate = D-glutamate. In terms of biological role, catalyzes the pyridoxal-phosphate-dependent dehydrative deamination of L-threonine and L-serine to ammonia and alpha-ketobutyrate and pyruvate, respectively. Also exhibits racemase activity towards L-glutamate and D-glutamate. The chain is Serine dehydratase-like (SDSL) from Homo sapiens (Human).